Reading from the N-terminus, the 119-residue chain is uncharacterized protein (119 aa).

The protein resides in the mitochondrion. This is an uncharacterized protein from Arabidopsis thaliana (Mouse-ear cress).